We begin with the raw amino-acid sequence, 225 residues long: Thymidylate kinase (225 aa).

15 to 22 (GGEGSGKS) is an ATP binding site.

It belongs to the thymidylate kinase family.

The enzyme catalyses dTMP + ATP = dTDP + ADP. Phosphorylation of dTMP to form dTDP in both de novo and salvage pathways of dTTP synthesis. The chain is Thymidylate kinase from Protochlamydia amoebophila (strain UWE25).